We begin with the raw amino-acid sequence, 358 residues long: F-box protein At4g35733 (358 aa).

The F-box domain occupies 4–51 (ATVWSDLPGELLDHIANGLFSKVELLRFRSICKTFRSAVDSDKNFLDH).

As to quaternary structure, part of a SCF (ASK-cullin-F-box) protein ligase complex.

It participates in protein modification; protein ubiquitination. Functionally, component of SCF(ASK-cullin-F-box) E3 ubiquitin ligase complexes, which may mediate the ubiquitination and subsequent proteasomal degradation of target proteins. The protein is F-box protein At4g35733 of Arabidopsis thaliana (Mouse-ear cress).